Consider the following 81-residue polypeptide: uncharacterized protein (81 aa).

This is an uncharacterized protein from Archaeoglobus fulgidus (strain ATCC 49558 / DSM 4304 / JCM 9628 / NBRC 100126 / VC-16).